The following is a 240-amino-acid chain: 2,3,4,5-tetrahydropyridine-2,6-dicarboxylate N-acetyltransferase (240 aa).

This sequence belongs to the transferase hexapeptide repeat family. DapH subfamily.

The catalysed reaction is (S)-2,3,4,5-tetrahydrodipicolinate + acetyl-CoA + H2O = L-2-acetamido-6-oxoheptanedioate + CoA. It functions in the pathway amino-acid biosynthesis; L-lysine biosynthesis via DAP pathway; LL-2,6-diaminopimelate from (S)-tetrahydrodipicolinate (acetylase route): step 1/3. Functionally, catalyzes the transfer of an acetyl group from acetyl-CoA to tetrahydrodipicolinate. The polypeptide is 2,3,4,5-tetrahydropyridine-2,6-dicarboxylate N-acetyltransferase (Staphylococcus epidermidis (strain ATCC 35984 / DSM 28319 / BCRC 17069 / CCUG 31568 / BM 3577 / RP62A)).